Here is a 734-residue protein sequence, read N- to C-terminus: 5-methyltetrahydropteroyltriglutamate--homocysteine methyltransferase (734 aa).

5-methyltetrahydropteroyltri-L-glutamate is bound by residues 15–18 and Lys104; that span reads REFK. Residues 409 to 411 and Glu462 each bind L-homocysteine; that span reads IGS. L-methionine contacts are provided by residues 409–411 and Glu462; that span reads IGS. Residues 493–494 and Trp539 each bind 5-methyltetrahydropteroyltri-L-glutamate; that span reads RC. Asp577 is an L-homocysteine binding site. Asp577 is an L-methionine binding site. Glu583 is a 5-methyltetrahydropteroyltri-L-glutamate binding site. His618, Cys620, and Glu642 together coordinate Zn(2+). Residue His672 is the Proton donor of the active site. Cys704 contacts Zn(2+).

It belongs to the vitamin-B12 independent methionine synthase family. Zn(2+) serves as cofactor.

The catalysed reaction is 5-methyltetrahydropteroyltri-L-glutamate + L-homocysteine = tetrahydropteroyltri-L-glutamate + L-methionine. The protein operates within amino-acid biosynthesis; L-methionine biosynthesis via de novo pathway; L-methionine from L-homocysteine (MetE route): step 1/1. Catalyzes the transfer of a methyl group from 5-methyltetrahydrofolate to homocysteine resulting in methionine formation. This chain is 5-methyltetrahydropteroyltriglutamate--homocysteine methyltransferase, found in Thermotoga maritima (strain ATCC 43589 / DSM 3109 / JCM 10099 / NBRC 100826 / MSB8).